A 230-amino-acid chain; its full sequence is MAIGKRLKKVREGIDRTKLYPIAEAIKMVKERAVSKFDETIEIAFNLGVDPRHADQMVRGVVSLPNGTGRTLRVGVFARGAKADEARAAGADVVGAEDLVEKVQGGTIEFDRCIATPDMMPLVGRLGKVLGPRGMMPNPKIGTVTMDVAGAVAGAKGGNVEFRVEKAGIVQAGIGKASFSEEKLVENIKALTDAVSKAKPAGAKGTYIQRVAVSSTMGPGVKVEPGTILG.

Belongs to the universal ribosomal protein uL1 family. In terms of assembly, part of the 50S ribosomal subunit.

Functionally, binds directly to 23S rRNA. The L1 stalk is quite mobile in the ribosome, and is involved in E site tRNA release. Its function is as follows. Protein L1 is also a translational repressor protein, it controls the translation of the L11 operon by binding to its mRNA. The sequence is that of Large ribosomal subunit protein uL1 from Rhodopseudomonas palustris (strain BisA53).